The sequence spans 227 residues: uncharacterized protein (227 aa).

An N-terminal signal peptide occupies residues 1–21 (MELKKIAVGLTALLGMSVANA).

This is an uncharacterized protein from Haemophilus influenzae (strain ATCC 51907 / DSM 11121 / KW20 / Rd).